Consider the following 524-residue polypeptide: Excitatory amino acid transporter 3 (524 aa).

Over 1-18 (MGKPARKGCEWKRFLKNN) the chain is Cytoplasmic. The helical transmembrane segment at 19–38 (WVLLSTVAAVVLGITTGVLV) threads the bilayer. At 39–61 (REHSNLSTLEKFYFAFPGEILMR) the chain is on the extracellular side. Residue asparagine 43 is glycosylated (N-linked (GlcNAc...) asparagine). Residues 62-82 (MLKLIILPLIISSMITGVAAL) traverse the membrane as a helical segment. Residues 83–93 (DSNVSGKIGLR) are Cytoplasmic-facing. Residues 94-114 (AVVYYFCTTLIAVILGIVLVV) form a helical membrane-spanning segment. Na(+)-binding residues include tyrosine 98, threonine 101, and threonine 102. The Extracellular segment spans residues 115–205 (SIKPGVTQKV…KTKEYKIVGM (91 aa)). Asparagine 178 and asparagine 195 each carry an N-linked (GlcNAc...) asparagine glycan. The helical transmembrane segment at 206-229 (YSDGINVLGLIVFCLVFGLVIGKM) threads the bilayer. Residues 230–238 (GEKGQILVD) are Cytoplasmic-facing. A helical membrane pass occupies residues 239–266 (FFNALSDATMKIVQIIMCYMPLGILFLI). The Extracellular portion of the chain corresponds to 267 to 286 (AGKIIEVEDWEIFRKLGLYM). A helical transmembrane segment spans residues 287-308 (ATVLTGLAIHSIVILPLIYFIV). Residues 309–313 (VRKNP) lie on the Cytoplasmic side of the membrane. The discontinuously helical intramembrane region spans 314–344 (FRFAMGMAQALLTALMISSSSATLPVTFRCA). Serine 331 and serine 333 together coordinate L-aspartate. The Cytoplasmic segment spans residues 345-353 (EENNQVDKR). A helical membrane pass occupies residues 354–380 (ITRFVLPVGATINMDGTALYEAVAAVF). 4 residues coordinate Na(+): glycine 362, threonine 364, asparagine 366, and aspartate 368. Threonine 370 contributes to the L-aspartate binding site. Residues 381–393 (IAQLNDLDLGIGQ) are Extracellular-facing. The discontinuously helical intramembrane region spans 394–427 (IITISITATSASIGAAGVPQAGLVTMVIVLSAVG). The Na(+) site is built by serine 405, isoleucine 406, and alanine 408. Valine 411 is an L-aspartate binding site. Residues 428–440 (LPAEDVTLIIAVD) lie on the Extracellular side of the membrane. Residues 441-462 (WLLDRFRTMVNVLGDAFGTGIV) form a helical membrane-spanning segment. 3 residues coordinate L-aspartate: arginine 447, threonine 448, and asparagine 451. Na(+) contacts are provided by asparagine 451 and aspartate 455. Over 463–524 (EKLSKKELEQ…TISFTQTSQF (62 aa)) the chain is Cytoplasmic. 2 positions are modified to phosphoserine: serine 517 and serine 522.

This sequence belongs to the dicarboxylate/amino acid:cation symporter (DAACS) (TC 2.A.23) family. SLC1A1 subfamily. As to quaternary structure, homotrimer. Interacts with ARL6IP5. Interacts with RTN2 (via N-terminus); the interaction promotes cell surface expression of SLC1A1. Interacts with SORCS2; this interaction is important for normal expression at the cell membrane. In terms of processing, glycosylated. Expressed in all tissues tested including liver, muscle, testis, ovary, retinoblastoma cell line, neurons and brain (in which there was dense expression in substantia nigra, red nucleus, hippocampus and in cerebral cortical layers).

The protein localises to the cell membrane. It localises to the apical cell membrane. The protein resides in the synapse. It is found in the synaptosome. Its subcellular location is the early endosome membrane. The protein localises to the late endosome membrane. It localises to the recycling endosome membrane. It catalyses the reaction K(+)(in) + L-glutamate(out) + 3 Na(+)(out) + H(+)(out) = K(+)(out) + L-glutamate(in) + 3 Na(+)(in) + H(+)(in). The catalysed reaction is K(+)(in) + L-aspartate(out) + 3 Na(+)(out) + H(+)(out) = K(+)(out) + L-aspartate(in) + 3 Na(+)(in) + H(+)(in). The enzyme catalyses D-aspartate(out) + K(+)(in) + 3 Na(+)(out) + H(+)(out) = D-aspartate(in) + K(+)(out) + 3 Na(+)(in) + H(+)(in). It carries out the reaction K(+)(in) + L-cysteine(out) + 3 Na(+)(out) + H(+)(out) = K(+)(out) + L-cysteine(in) + 3 Na(+)(in) + H(+)(in). Sodium-dependent, high-affinity amino acid transporter that mediates the uptake of L-glutamate and also L-aspartate and D-aspartate. Can also transport L-cysteine. Functions as a symporter that transports one amino acid molecule together with two or three Na(+) ions and one proton, in parallel with the counter-transport of one K(+) ion. Mediates Cl(-) flux that is not coupled to amino acid transport; this avoids the accumulation of negative charges due to aspartate and Na(+) symport. Plays an important role in L-glutamate and L-aspartate reabsorption in renal tubuli. Plays a redundant role in the rapid removal of released glutamate from the synaptic cleft, which is essential for terminating the postsynaptic action of glutamate. Contributes to glutathione biosynthesis and protection against oxidative stress via its role in L-glutamate and L-cysteine transport. Negatively regulated by ARL6IP5. This is Excitatory amino acid transporter 3 from Homo sapiens (Human).